Here is a 505-residue protein sequence, read N- to C-terminus: Folate transporter 1 (505 aa).

4 consecutive transmembrane segments (helical) span residues 58–78 (SLIA…IYLL), 89–109 (LSIV…WAVI), 122–142 (YYLL…GLIT), and 146–166 (LFIT…CNVI). Residues Asn-177, Asn-181, and Asn-186 are each glycosylated (N-linked (GlcNAc...) asparagine). The next 2 membrane-spanning stretches (helical) occupy residues 192–212 (AFRK…LLLI) and 216–236 (HIFL…FFII). An N-linked (GlcNAc...) asparagine glycan is attached at Asn-240. 5 consecutive transmembrane segments (helical) span residues 266-286 (IIFI…FFYI), 300-320 (MAMF…LFFT), 326-346 (KLLL…LVVI), 352-372 (FLFI…EFIA), and 405-425 (FASI…NITS). N-linked (GlcNAc...) asparagine glycosylation is present at Asn-427. The helical transmembrane segment at 431–451 (LPYMIIICCLTNIIPIFFLYI) threads the bilayer. N-linked (GlcNAc...) asparagine glycosylation occurs at Asn-454.

The protein belongs to the major facilitator superfamily. Folate-biopterin transporter (TC 2.A.71) family.

Its subcellular location is the cell membrane. It catalyses the reaction folate(in) + H(+)(in) = folate(out) + H(+)(out). With respect to regulation, transport of folates is inhibited by probenecid and methotrexate. Functionally, folate transporter with broad substrate specificity. Transports folic acid, folinic acid, pteroic acid, dihydropteroic acid, the folate precursor p-amino benzoic acid (pABA) and the human folate catabolite pABA monoglutamate. This is Folate transporter 1 from Plasmodium falciparum (isolate 3D7).